Consider the following 300-residue polypeptide: Ribokinase (300 aa).

Substrate-binding positions include 11 to 13 (SMD), 39 to 43 (GKGAN), and E139. Residues N183 and 210–215 (TLGSEG) each bind ATP. 2 residues coordinate K(+): D236 and T238. 241–242 (GD) lines the ATP pocket. D242 contributes to the substrate binding site. The active-site Proton acceptor is the D242. Residues S272, K275, and G277 each coordinate K(+).

The protein belongs to the carbohydrate kinase PfkB family. Ribokinase subfamily. As to quaternary structure, homodimer. The cofactor is Mg(2+).

Its subcellular location is the cytoplasm. It catalyses the reaction D-ribose + ATP = D-ribose 5-phosphate + ADP + H(+). It participates in carbohydrate metabolism; D-ribose degradation; D-ribose 5-phosphate from beta-D-ribopyranose: step 2/2. Activated by a monovalent cation that binds near, but not in, the active site. The most likely occupant of the site in vivo is potassium. Ion binding induces a conformational change that may alter substrate affinity. Its function is as follows. Catalyzes the phosphorylation of ribose at O-5 in a reaction requiring ATP and magnesium. The resulting D-ribose-5-phosphate can then be used either for sythesis of nucleotides, histidine, and tryptophan, or as a component of the pentose phosphate pathway. This chain is Ribokinase, found in Lactococcus lactis subsp. lactis (strain IL1403) (Streptococcus lactis).